The primary structure comprises 305 residues: MRKIIVGSRRSQLAMTQTKWVIEQLKQAGATNEFEIKEIVTKGDQIVDVQLSKVGGKGLFVKEIQQQMLDGDIDFAVHSMKDVPAELPEELYISCMPKRVDARDVLICENGYTFETLPKGSIVGTSSLRRGAQILAARPDLEIQWIRGNIDTRLKKLDSENYNAILLAKAGLERMGWTDRVDFEALDPDVMVPAVGQGVLAIESRKDDAEVTTVLQLLHDDVTAKAATAERTFLKAIEGSCHVPVGGYATVNGDDVTLTGLIASVDGKEVLRVTKTSTDGVALGQAVAEELLGRGGREILASVNE.

An S-(dipyrrolylmethanemethyl)cysteine modification is found at cysteine 241.

This sequence belongs to the HMBS family. As to quaternary structure, monomer. Requires dipyrromethane as cofactor.

It carries out the reaction 4 porphobilinogen + H2O = hydroxymethylbilane + 4 NH4(+). It participates in porphyrin-containing compound metabolism; protoporphyrin-IX biosynthesis; coproporphyrinogen-III from 5-aminolevulinate: step 2/4. Functionally, tetrapolymerization of the monopyrrole PBG into the hydroxymethylbilane pre-uroporphyrinogen in several discrete steps. The polypeptide is Porphobilinogen deaminase (Exiguobacterium sp. (strain ATCC BAA-1283 / AT1b)).